Reading from the N-terminus, the 430-residue chain is Aspartate aminotransferase, mitochondrial (430 aa).

The N-terminal 29 residues, 1-29, are a transit peptide targeting the mitochondrion; sequence MALLHSGRVLSGVASAFHPGLAAAASARA. Thr-48 carries the phosphothreonine modification. Lys-59 carries the N6-acetyllysine modification. Gly-65 is a substrate binding site. Lys-73 is subject to N6-acetyllysine; alternate. The residue at position 73 (Lys-73) is an N6-succinyllysine; alternate. At Lys-82 the chain carries N6-acetyllysine. Lys-90 bears the N6-acetyllysine; alternate mark. Lys-90 carries the post-translational modification N6-succinyllysine; alternate. Tyr-96 is modified (3'-nitrotyrosine; alternate). Phosphotyrosine; alternate is present on Tyr-96. Lys-107, Lys-122, and Lys-159 each carry N6-acetyllysine; alternate. N6-succinyllysine; alternate is present on residues Lys-107, Lys-122, and Lys-159. A substrate-binding site is contributed by Trp-162. Position 185 is an N6-acetyllysine; alternate (Lys-185). An N6-succinyllysine; alternate modification is found at Lys-185. A substrate-binding site is contributed by Asn-215. Lys-227 carries the post-translational modification N6-succinyllysine. Lys-234 carries the N6-acetyllysine modification. An N6-acetyllysine; alternate mark is found at Lys-279 and Lys-296. At Lys-279 the chain carries N6-(pyridoxal phosphate)lysine; alternate. Lys-296 bears the N6-succinyllysine; alternate mark. Lys-302 carries the post-translational modification N6-acetyllysine. Lys-309 is modified (N6-acetyllysine; alternate). Position 309 is an N6-succinyllysine; alternate (Lys-309). Position 313 is an asymmetric dimethylarginine (Arg-313). Lys-345 is subject to N6-acetyllysine. Residue Lys-363 is modified to N6-acetyllysine; alternate. Residue Lys-363 is modified to N6-succinyllysine; alternate. N6-acetyllysine is present on residues Lys-364 and Lys-387. Residues Lys-396 and Lys-404 each carry the N6-acetyllysine; alternate modification. An N6-succinyllysine; alternate mark is found at Lys-396 and Lys-404. Arg-407 contacts substrate.

This sequence belongs to the class-I pyridoxal-phosphate-dependent aminotransferase family. Homodimer. Pyridoxal 5'-phosphate serves as cofactor.

It is found in the mitochondrion matrix. The protein localises to the cell membrane. It catalyses the reaction L-aspartate + 2-oxoglutarate = oxaloacetate + L-glutamate. The enzyme catalyses L-kynurenine + 2-oxoglutarate = kynurenate + L-glutamate + H2O. In terms of biological role, catalyzes the irreversible transamination of the L-tryptophan metabolite L-kynurenine to form kynurenic acid (KA). As a member of the malate-aspartate shuttle, it has a key role in the intracellular NAD(H) redox balance. Is important for metabolite exchange between mitochondria and cytosol, and for amino acid metabolism. Facilitates cellular uptake of long-chain free fatty acids. This is Aspartate aminotransferase, mitochondrial (GOT2) from Sus scrofa (Pig).